Here is a 351-residue protein sequence, read N- to C-terminus: MAANTTSTAATSSPGGMSLSLLPIVLLSVALVVGLPGNSFVVWSILKRMQKRSVTALLVLNLALADLAVLLTAPFFLHFLARGTWSFEVTGCRLCHYVCGVSMYASVLLITIMSLDRSLAVARPFVSQKVRTKAFARWVLAGIWVVSFLLAIPVLVYRTVTPKNKTLICDSRYPSDGHKVFHLLFEAITGFLLPFLAVVASYSDIGRRLQARRFRRSRRTGRLVVLIILAFAAFWLPYHLVNLVEAGRTLAGWDKNSPAGQRLKLARYVLIALAFLSSSVNPVLYACAGGGLLRSAGVGFVVKLLEGTGSEVSSTRRGGTLVQTPKATPTCPEPGPTDSFMTSSTPPESSK.

Residues 1–21 lie on the Extracellular side of the membrane; it reads MAANTTSTAATSSPGGMSLSL. Residue N4 is glycosylated (N-linked (GlcNAc...) asparagine). A helical transmembrane segment spans residues 22–44; that stretch reads LPIVLLSVALVVGLPGNSFVVWS. Residues 45–56 are Cytoplasmic-facing; it reads ILKRMQKRSVTA. A helical membrane pass occupies residues 57–77; that stretch reads LLVLNLALADLAVLLTAPFFL. Over 78-93 the chain is Extracellular; sequence HFLARGTWSFEVTGCR. The helical transmembrane segment at 94-115 threads the bilayer; the sequence is LCHYVCGVSMYASVLLITIMSL. Topologically, residues 116-140 are cytoplasmic; the sequence is DRSLAVARPFVSQKVRTKAFARWVL. A helical membrane pass occupies residues 141–161; it reads AGIWVVSFLLAIPVLVYRTVT. Residues 162-179 are Extracellular-facing; that stretch reads PKNKTLICDSRYPSDGHK. An N-linked (GlcNAc...) asparagine glycan is attached at N164. A helical transmembrane segment spans residues 180–200; sequence VFHLLFEAITGFLLPFLAVVA. Over 201 to 222 the chain is Cytoplasmic; that stretch reads SYSDIGRRLQARRFRRSRRTGR. The helical transmembrane segment at 223 to 243 threads the bilayer; sequence LVVLIILAFAAFWLPYHLVNL. The Extracellular portion of the chain corresponds to 244–268; the sequence is VEAGRTLAGWDKNSPAGQRLKLARY. A helical membrane pass occupies residues 269–289; the sequence is VLIALAFLSSSVNPVLYACAG. The Cytoplasmic segment spans residues 290-351; the sequence is GGLLRSAGVG…TSSTPPESSK (62 aa). Polar residues-rich tracts occupy residues 311 to 327 and 339 to 351; these read EVSS…TPKA and SFMT…ESSK. The interval 311 to 351 is disordered; sequence EVSSTRRGGTLVQTPKATPTCPEPGPTDSFMTSSTPPESSK.

Belongs to the G-protein coupled receptor 1 family. Phosphorylated by GRK6 upon leukotriene B4 binding; which promotes desensitization. In terms of tissue distribution, exclusively expressed in polymorphonuclear leukocytes.

It localises to the cell membrane. Receptor for leukotriene B4, a potent chemoattractant involved in inflammation and immune response. In Rattus norvegicus (Rat), this protein is Leukotriene B4 receptor 1 (Ltb4r).